A 134-amino-acid chain; its full sequence is ATP synthase epsilon chain (134 aa).

The protein belongs to the ATPase epsilon chain family. F-type ATPases have 2 components, CF(1) - the catalytic core - and CF(0) - the membrane proton channel. CF(1) has five subunits: alpha(3), beta(3), gamma(1), delta(1), epsilon(1). CF(0) has three main subunits: a, b and c.

The protein resides in the cell membrane. In terms of biological role, produces ATP from ADP in the presence of a proton gradient across the membrane. The protein is ATP synthase epsilon chain of Listeria monocytogenes serotype 4a (strain HCC23).